A 211-amino-acid polypeptide reads, in one-letter code: Uracil phosphoribosyltransferase (211 aa).

Residues arginine 78, arginine 103, and 130 to 138 (DPMLATGGT) contribute to the 5-phospho-alpha-D-ribose 1-diphosphate site. Residues isoleucine 195 and 200 to 202 (GDA) contribute to the uracil site. Aspartate 201 is a 5-phospho-alpha-D-ribose 1-diphosphate binding site.

Belongs to the UPRTase family. It depends on Mg(2+) as a cofactor.

It carries out the reaction UMP + diphosphate = 5-phospho-alpha-D-ribose 1-diphosphate + uracil. It functions in the pathway pyrimidine metabolism; UMP biosynthesis via salvage pathway; UMP from uracil: step 1/1. Allosterically activated by GTP. Its function is as follows. Catalyzes the conversion of uracil and 5-phospho-alpha-D-ribose 1-diphosphate (PRPP) to UMP and diphosphate. This Pseudarthrobacter chlorophenolicus (strain ATCC 700700 / DSM 12829 / CIP 107037 / JCM 12360 / KCTC 9906 / NCIMB 13794 / A6) (Arthrobacter chlorophenolicus) protein is Uracil phosphoribosyltransferase.